Consider the following 427-residue polypeptide: Trigger factor (427 aa).

Residues 163 to 248 form the PPIase FKBP-type domain; sequence GDTVVIDFVG…IHEVKAKEVP (86 aa).

The protein belongs to the FKBP-type PPIase family. Tig subfamily.

It localises to the cytoplasm. The catalysed reaction is [protein]-peptidylproline (omega=180) = [protein]-peptidylproline (omega=0). In terms of biological role, involved in protein export. Acts as a chaperone by maintaining the newly synthesized protein in an open conformation. Functions as a peptidyl-prolyl cis-trans isomerase. This Streptococcus pneumoniae (strain 70585) protein is Trigger factor.